The primary structure comprises 235 residues: RING-H2 finger protein ATL33 (235 aa).

A helical transmembrane segment spans residues 64 to 84 (LIFVVIAFVAVPALVYALFFN). A disordered region spans residues 87-133 (CSSSRRNSSSSRTSSSSDDTPHATVDTPPITETTVTSESGGKFHKDT). The segment covering 88-103 (SSSRRNSSSSRTSSSS) has biased composition (low complexity). Residues 116 to 125 (ITETTVTSES) are compositionally biased toward polar residues. Residues 142–184 (CSVCLMVFTDSDELRQLSECKHAFHVLCIETWLKDHPNCPICR) form an RING-type; atypical zinc finger. Positions 201–216 (NVNGNVNRSGGNRRVS) are enriched in low complexity. The interval 201–235 (NVNGNVNRSGGNRRVSATSRDDDWRQGLPDASSLV) is disordered.

The protein belongs to the RING-type zinc finger family. ATL subfamily.

It is found in the membrane. The enzyme catalyses S-ubiquitinyl-[E2 ubiquitin-conjugating enzyme]-L-cysteine + [acceptor protein]-L-lysine = [E2 ubiquitin-conjugating enzyme]-L-cysteine + N(6)-ubiquitinyl-[acceptor protein]-L-lysine.. Its pathway is protein modification; protein ubiquitination. This Arabidopsis thaliana (Mouse-ear cress) protein is RING-H2 finger protein ATL33 (ATL33).